Here is a 210-residue protein sequence, read N- to C-terminus: Small ribosomal subunit protein uS3 (210 aa).

The 69-residue stretch at 39 to 107 folds into the KH type-2 domain; it reads IREKLMEKLK…EILLDIQEVK (69 aa).

Belongs to the universal ribosomal protein uS3 family. As to quaternary structure, part of the 30S ribosomal subunit. Forms a tight complex with proteins S10 and S14.

Functionally, binds the lower part of the 30S subunit head. Binds mRNA in the 70S ribosome, positioning it for translation. The protein is Small ribosomal subunit protein uS3 of Opitutus terrae (strain DSM 11246 / JCM 15787 / PB90-1).